A 431-amino-acid chain; its full sequence is Galactose-3-O-sulfotransferase 3 (431 aa).

The Cytoplasmic portion of the chain corresponds to 1-19; it reads MPPILQRLQQATKMMSRRK. A helical; Signal-anchor for type II membrane protein transmembrane segment spans residues 20-40; that stretch reads ILLLVLGCSTVSLLIHQGAQL. Residues 41–431 are Lumenal-facing; it reads SWYPKLFPLS…RVLPRGPQGP (391 aa). N-linked (GlcNAc...) asparagine glycans are attached at residues Asn-91, Asn-110, Asn-177, and Asn-302. The disordered stretch occupies residues 399 to 431; sequence QKRRGGARARPEPVLDNPPPRPIRVLPRGPQGP.

It belongs to the galactose-3-O-sulfotransferase family. Mg(2+) serves as cofactor. Highly expressed in thyroid, brain, kidney, heart and spinal cord.

It localises to the golgi apparatus. The protein resides in the golgi stack membrane. It functions in the pathway protein modification; carbohydrate sulfation. Its function is as follows. Transfers a sulfate to position 3 of non-reducing beta-galactosyl residues in N-glycans and core2-branched O-glycans. Has high activity towards Gal-beta-1,4-GlcNAc, Gal-beta-1,4(Fuc-alpha-1,3)GlcNAc and lower activity towards Gal-beta-1,3(Fuc-alpha-1,4)GlcNAc. In Homo sapiens (Human), this protein is Galactose-3-O-sulfotransferase 3 (GAL3ST3).